The following is a 63-amino-acid chain: Large ribosomal subunit protein uL30 (63 aa).

This sequence belongs to the universal ribosomal protein uL30 family. In terms of assembly, part of the 50S ribosomal subunit.

This is Large ribosomal subunit protein uL30 from Bradyrhizobium sp. (strain BTAi1 / ATCC BAA-1182).